We begin with the raw amino-acid sequence, 377 residues long: Membrane progestin receptor epsilon (377 aa).

Positions 1–40 (MPRRLQPRGAGTKGPPAPAPAASGAARNSHSAASRDPPAS) are disordered. Residues 1-86 (MPRRLQPRGA…VLKPTNETLN (86 aa)) are Cytoplasmic-facing. Low complexity predominate over residues 9–26 (GAGTKGPPAPAPAASGAA). Residues 87–107 (FWTHFIPLLLFLSKFCRLFFL) form a helical membrane-spanning segment. The Extracellular segment spans residues 108–116 (SGGDVPFHH). Residues 117–137 (PWLLPLWCYASGVLLTFAMSC) traverse the membrane as a helical segment. Over 138 to 162 (TAHVFSCLSLRLRAAFFYLDYASIS) the chain is Cytoplasmic. A helical transmembrane segment spans residues 163–183 (YYGFGSTVAYYYYLLPGLSLL). The Extracellular segment spans residues 184–205 (DARVMTPYLQQRLGWHVDCTRL). A helical transmembrane segment spans residues 206–226 (IAAYRALVLPVAFVLAVACTV). Over 227 to 243 (ACCKSRTDWCTYPFALR) the chain is Cytoplasmic. The chain crosses the membrane as a helical span at residues 244–264 (TFVFVMPLSMACPIMLESWLF). At 265-301 (DLRGENPTLFVHFYRRYFWLVVAAFFNVSKIPERIQP) the chain is on the extracellular side. The chain crosses the membrane as a helical span at residues 302-322 (GLFDIIGHSHQLFHIFTFLSI). Topologically, residues 323–343 (YDQVYYVEEGLRQFLQAPPAA) are cytoplasmic. A helical transmembrane segment spans residues 344–364 (PTFSGTVGYMLLLVVCLGLVI). At 365-377 (RKFLNSSEFCSKK) the chain is on the extracellular side.

This sequence belongs to the ADIPOR family. In terms of assembly, homodimer. Expression levels vary widely in a range of tissues. Expressed in the brain, at high level in the pituitary gland and also in hypothalamus, limbic system, caudate nucleus accumens, pons and olfactory bulb.

The protein localises to the cell membrane. Plasma membrane progesterone (P4) receptor coupled to G proteins. Seems to act through a G(s) mediated pathway. May be involved in regulating rapid P4 signaling in the nervous system. Also binds dehydroepiandrosterone (DHEA), pregnanolone, pregnenolone and allopregnanolone. The protein is Membrane progestin receptor epsilon of Homo sapiens (Human).